The primary structure comprises 445 residues: Phosphoglucosamine mutase (445 aa).

The active-site Phosphoserine intermediate is the S102. Residues S102, D241, D243, and D245 each contribute to the Mg(2+) site. At S102 the chain carries Phosphoserine.

It belongs to the phosphohexose mutase family. The cofactor is Mg(2+). Activated by phosphorylation.

The enzyme catalyses alpha-D-glucosamine 1-phosphate = D-glucosamine 6-phosphate. Its function is as follows. Catalyzes the conversion of glucosamine-6-phosphate to glucosamine-1-phosphate. In Escherichia coli (strain 55989 / EAEC), this protein is Phosphoglucosamine mutase.